Reading from the N-terminus, the 627-residue chain is Plasmepsin IX (627 aa).

Residues 1-13 lie on the Cytoplasmic side of the membrane; it reads MFFINFKKIKKKQ. The chain crosses the membrane as a helical; Signal-anchor for type II membrane protein span at residues 14–34; the sequence is FPIYLTQHRIITVFLIFIYFI. Residues 35 to 627 are Lumenal-facing; it reads NLKDCFHINN…SSLHNKINNL (593 aa). In terms of domain architecture, Peptidase A1 spans 228-605; it reads YVGYIQIGTP…NNNSSYVGIA (378 aa). Catalysis depends on residues D246 and D495.

The protein belongs to the peptidase A1 family. Autocleaved into a p55 mature form.

It is found in the membrane. It localises to the cytoplasmic vesicle. The protein localises to the secretory vesicle. Its subcellular location is the rhoptry. Inhibited by small molecule 49c. Inhibited by small molecule WM382. Functionally, during the asexual blood stage, initiates the proteolytic maturation of several rhoptry proteins and thus, is required for merozoite invasion of host erythrocytes and probably the subsequent development of the ring-stage. Cleaves rhoptry associated protein 1 RAP1 and apical sushi protein ASP during schizont maturation. Also cleaves rhoptry protein RON3. In Plasmodium falciparum (isolate 3D7), this protein is Plasmepsin IX.